The following is a 240-amino-acid chain: Uridylate kinase (240 aa).

An ATP-binding site is contributed by 14–17; that stretch reads KLSG. Glycine 56 contributes to the UMP binding site. Glycine 57 and arginine 61 together coordinate ATP. UMP is bound by residues aspartate 76 and 137 to 144; that span reads TGNPFFTT. ATP is bound by residues threonine 164, tyrosine 170, and aspartate 173.

Belongs to the UMP kinase family. In terms of assembly, homohexamer.

The protein resides in the cytoplasm. It carries out the reaction UMP + ATP = UDP + ADP. It functions in the pathway pyrimidine metabolism; CTP biosynthesis via de novo pathway; UDP from UMP (UMPK route): step 1/1. With respect to regulation, inhibited by UTP. Functionally, catalyzes the reversible phosphorylation of UMP to UDP. This chain is Uridylate kinase, found in Acidovorax sp. (strain JS42).